Consider the following 293-residue polypeptide: Energy-coupling factor transporter ATP-binding protein EcfA2 (293 aa).

The ABC transporter domain maps to Ile-3–Asp-246. Position 40 to 47 (Gly-40 to Ser-47) interacts with ATP.

This sequence belongs to the ABC transporter superfamily. Energy-coupling factor EcfA family. Forms a stable energy-coupling factor (ECF) transporter complex composed of 2 membrane-embedded substrate-binding proteins (S component), 2 ATP-binding proteins (A component) and 2 transmembrane proteins (T component).

It localises to the cell membrane. In terms of biological role, ATP-binding (A) component of a common energy-coupling factor (ECF) ABC-transporter complex. Unlike classic ABC transporters this ECF transporter provides the energy necessary to transport a number of different substrates. The polypeptide is Energy-coupling factor transporter ATP-binding protein EcfA2 (Bacillus anthracis).